We begin with the raw amino-acid sequence, 464 residues long: Argininosuccinate lyase (464 aa).

Belongs to the lyase 1 family. Argininosuccinate lyase subfamily.

It localises to the cytoplasm. It catalyses the reaction 2-(N(omega)-L-arginino)succinate = fumarate + L-arginine. The protein operates within amino-acid biosynthesis; L-arginine biosynthesis; L-arginine from L-ornithine and carbamoyl phosphate: step 3/3. In Pseudomonas syringae pv. tomato (strain ATCC BAA-871 / DC3000), this protein is Argininosuccinate lyase.